We begin with the raw amino-acid sequence, 475 residues long: UDP-glycosyltransferase 708A6 (475 aa).

Residues serine 286, 348–349, 366–374, and 388–391 each bind UDP-alpha-D-glucose; these read WV, HCGWNSLTE, and FGDQ.

This sequence belongs to the UDP-glycosyltransferase family. Expressed in radicles, hypocotyls and juvenile leaves. Expressed at low levels in roots.

In terms of biological role, bifunctional glycosyltransferase that can produce both C- and O-glycosidated flavonoids. Converts 2-hydroxynaringenin to isovitexin. Converts eriodictyol to orientin and isoorientin. Converts naringenin and eriodictyol to naringenin 7-O-glucoside and eriodictyol 7-O-glucoside, respectively. In Zea mays (Maize), this protein is UDP-glycosyltransferase 708A6.